Here is a 232-residue protein sequence, read N- to C-terminus: Ribonuclease 3 (232 aa).

In terms of domain architecture, RNase III spans 5 to 134 (ENLLFDRFGL…FLGALLLDKG (130 aa)). Glutamate 47 lines the Mg(2+) pocket. Aspartate 51 is a catalytic residue. Mg(2+)-binding residues include aspartate 120 and glutamate 123. Glutamate 123 is an active-site residue. A DRBM domain is found at 160–229 (DYKTKLQELL…AKNAFEKENH (70 aa)).

This sequence belongs to the ribonuclease III family. Homodimer. Requires Mg(2+) as cofactor.

Its subcellular location is the cytoplasm. It carries out the reaction Endonucleolytic cleavage to 5'-phosphomonoester.. In terms of biological role, digests double-stranded RNA. Involved in the processing of primary rRNA transcript to yield the immediate precursors to the large and small rRNAs (23S and 16S). Processes some mRNAs, and tRNAs when they are encoded in the rRNA operon. Processes pre-crRNA and tracrRNA of type II CRISPR loci if present in the organism. The polypeptide is Ribonuclease 3 (Streptococcus gordonii (strain Challis / ATCC 35105 / BCRC 15272 / CH1 / DL1 / V288)).